We begin with the raw amino-acid sequence, 1235 residues long: Major DNA-binding protein (1235 aa).

The interval 536–584 (GGLDGKGDDGVPGGGAGGGGGRDVSGGPSDGLGGGRGGGGGGDSGGMMG) is disordered. Gly residues predominate over residues 545 to 584 (GVPGGGAGGGGGRDVSGGPSDGLGGGRGGGGGGDSGGMMG). A Required for filament formation motif is present at residues 846 to 847 (FW). Residues 1214–1226 (GVGGSSGGGGGSG) are compositionally biased toward gly residues. A disordered region spans residues 1214–1235 (GVGGSSGGGGGSGLLPAKRSRL). The tract at residues 1232 to 1235 (RSRL) is required for nuclear localization.

This sequence belongs to the herpesviridae major DNA-binding protein family. As to quaternary structure, homooligomers. Forms double-helical filaments necessary for the formation of replication compartments within the host nucleus. Interacts with the origin-binding protein. Interacts with the helicase primase complex; this interaction stimulates primer synthesis activity of the helicase-primase complex. Interacts with the DNA polymerase. Interacts with the alkaline exonuclease; this interaction increases its nuclease processivity.

The protein localises to the host nucleus. In terms of biological role, plays several crucial roles in viral infection. Participates in the opening of the viral DNA origin to initiate replication by interacting with the origin-binding protein. May disrupt loops, hairpins and other secondary structures present on ssDNA to reduce and eliminate pausing of viral DNA polymerase at specific sites during elongation. Promotes viral DNA recombination by performing strand-transfer, characterized by the ability to transfer a DNA strand from a linear duplex to a complementary single-stranded DNA circle. Can also catalyze the renaturation of complementary single strands. Additionally, reorganizes the host cell nucleus, leading to the formation of prereplicative sites and replication compartments. This process is driven by the protein which can form double-helical filaments in the absence of DNA. In Homo sapiens (Human), this protein is Major DNA-binding protein.